A 284-amino-acid polypeptide reads, in one-letter code: MMEQKTVRVGDIDVANDKPFVLFGGMNVLESRDLAMKICEHYVEVTNKLGIPFVFKASFDKANRSSVHSYRGPGMEEGLKIFQELKDTFGVKIITDIHEIYQAQPVADVVDVIQLPAFLARQTDLVEAMAKTGAVINVKKPQYMSPGQVGNIVEKFAECDNENVILCERGALHGYDNLVVDMLGFDVMKKASKGSPIIFDVTHALQCRDPLGAASGGRREQTVDLARSGIATGIAGLFMEAHPAPDQARCDGPSAFPLDKLEPFLNQIKQLDDLIKGFEAIEIN.

It belongs to the KdsA family.

Its subcellular location is the cytoplasm. The catalysed reaction is D-arabinose 5-phosphate + phosphoenolpyruvate + H2O = 3-deoxy-alpha-D-manno-2-octulosonate-8-phosphate + phosphate. Its pathway is carbohydrate biosynthesis; 3-deoxy-D-manno-octulosonate biosynthesis; 3-deoxy-D-manno-octulosonate from D-ribulose 5-phosphate: step 2/3. It participates in bacterial outer membrane biogenesis; lipopolysaccharide biosynthesis. In Photobacterium profundum (strain SS9), this protein is 2-dehydro-3-deoxyphosphooctonate aldolase.